The following is a 238-amino-acid chain: Segregation and condensation protein A (238 aa).

The protein belongs to the ScpA family. As to quaternary structure, component of a cohesin-like complex composed of ScpA, ScpB and the Smc homodimer, in which ScpA and ScpB bind to the head domain of Smc. The presence of the three proteins is required for the association of the complex with DNA.

The protein localises to the cytoplasm. Functionally, participates in chromosomal partition during cell division. May act via the formation of a condensin-like complex containing Smc and ScpB that pull DNA away from mid-cell into both cell halves. This Macrococcus caseolyticus (strain JCSC5402) (Macrococcoides caseolyticum) protein is Segregation and condensation protein A.